The chain runs to 596 residues: Elongation factor 4 (596 aa).

Residues 2–183 (ENIRNFSIIA…AIIKRIPAPK (182 aa)) enclose the tr-type G domain. GTP is bound by residues 14-19 (DHGKST) and 130-133 (NKID).

This sequence belongs to the TRAFAC class translation factor GTPase superfamily. Classic translation factor GTPase family. LepA subfamily.

It is found in the cell inner membrane. It catalyses the reaction GTP + H2O = GDP + phosphate + H(+). Functionally, required for accurate and efficient protein synthesis under certain stress conditions. May act as a fidelity factor of the translation reaction, by catalyzing a one-codon backward translocation of tRNAs on improperly translocated ribosomes. Back-translocation proceeds from a post-translocation (POST) complex to a pre-translocation (PRE) complex, thus giving elongation factor G a second chance to translocate the tRNAs correctly. Binds to ribosomes in a GTP-dependent manner. In Campylobacter hominis (strain ATCC BAA-381 / DSM 21671 / CCUG 45161 / LMG 19568 / NCTC 13146 / CH001A), this protein is Elongation factor 4.